The chain runs to 486 residues: Ribosomal RNA small subunit methyltransferase F (486 aa).

S-adenosyl-L-methionine is bound by residues 122 to 128 (ASAPGSK), glutamate 146, aspartate 173, and aspartate 191. The active-site Nucleophile is cysteine 244.

It belongs to the class I-like SAM-binding methyltransferase superfamily. RsmB/NOP family.

The protein resides in the cytoplasm. It catalyses the reaction cytidine(1407) in 16S rRNA + S-adenosyl-L-methionine = 5-methylcytidine(1407) in 16S rRNA + S-adenosyl-L-homocysteine + H(+). Its function is as follows. Specifically methylates the cytosine at position 1407 (m5C1407) of 16S rRNA. The polypeptide is Ribosomal RNA small subunit methyltransferase F (Shewanella loihica (strain ATCC BAA-1088 / PV-4)).